Reading from the N-terminus, the 682-residue chain is Glucan endo-1,3-beta-glucosidase A1 (682 aa).

Positions 1–38 (MKPSHFTEKRFMKKVLGLFLVVVMLASVGVLPTSKVQA) are cleaved as a signal peptide. The GH16 domain occupies 391–682 (YTFIGNPNAP…VDYVRVYKEQ (292 aa)). The active-site Nucleophile is the glutamate 552. Glutamate 557 serves as the catalytic Proton donor.

It belongs to the glycosyl hydrolase 16 family.

It localises to the secreted. The enzyme catalyses Hydrolysis of (1-&gt;3)-beta-D-glucosidic linkages in (1-&gt;3)-beta-D-glucans.. Lysis of cellular walls containing beta-1,3-glucans. Implicated in the defense against fungal pathogens. This is Glucan endo-1,3-beta-glucosidase A1 (glcA) from Niallia circulans (Bacillus circulans).